The primary structure comprises 402 residues: Beta sliding clamp (402 aa).

This sequence belongs to the beta sliding clamp family. In terms of assembly, forms a ring-shaped head-to-tail homodimer around DNA which binds and tethers DNA polymerases and other proteins to the DNA. The DNA replisome complex has a single clamp-loading complex (3 tau and 1 each of delta, delta', psi and chi subunits) which binds 3 Pol III cores (1 core on the leading strand and 2 on the lagging strand) each with a beta sliding clamp dimer. Additional proteins in the replisome are other copies of gamma, psi and chi, Ssb, DNA helicase and RNA primase.

Its subcellular location is the cytoplasm. Its function is as follows. Confers DNA tethering and processivity to DNA polymerases and other proteins. Acts as a clamp, forming a ring around DNA (a reaction catalyzed by the clamp-loading complex) which diffuses in an ATP-independent manner freely and bidirectionally along dsDNA. Initially characterized for its ability to contact the catalytic subunit of DNA polymerase III (Pol III), a complex, multichain enzyme responsible for most of the replicative synthesis in bacteria; Pol III exhibits 3'-5' exonuclease proofreading activity. The beta chain is required for initiation of replication as well as for processivity of DNA replication. The chain is Beta sliding clamp (dnaN) from Mycobacterium tuberculosis (strain CDC 1551 / Oshkosh).